The chain runs to 201 residues: dITP/XTP pyrophosphatase (201 aa).

9 to 14 provides a ligand contact to substrate; sequence TRNSGK. Residues E42 and D71 each coordinate Mg(2+). D71 functions as the Proton acceptor in the catalytic mechanism. Substrate is bound by residues S72, 156 to 159, K178, and 183 to 184; these read FGYD and HR.

Belongs to the HAM1 NTPase family. As to quaternary structure, homodimer. Mg(2+) is required as a cofactor.

It carries out the reaction XTP + H2O = XMP + diphosphate + H(+). It catalyses the reaction dITP + H2O = dIMP + diphosphate + H(+). The enzyme catalyses ITP + H2O = IMP + diphosphate + H(+). In terms of biological role, pyrophosphatase that catalyzes the hydrolysis of nucleoside triphosphates to their monophosphate derivatives, with a high preference for the non-canonical purine nucleotides XTP (xanthosine triphosphate), dITP (deoxyinosine triphosphate) and ITP. Seems to function as a house-cleaning enzyme that removes non-canonical purine nucleotides from the nucleotide pool, thus preventing their incorporation into DNA/RNA and avoiding chromosomal lesions. The protein is dITP/XTP pyrophosphatase (ynbD) of Lactococcus lactis subsp. lactis (strain IL1403) (Streptococcus lactis).